Here is a 313-residue protein sequence, read N- to C-terminus: Protein OPG185 (313 aa).

Positions methionine 1–serine 16 are cleaved as a signal peptide. Topologically, residues threonine 17 to lysine 277 are virion surface. The 104-residue stretch at proline 18–tyrosine 121 folds into the Ig-like V-type domain. An intrachain disulfide couples cysteine 36 to cysteine 105. 5 N-linked (GlcNAc...) asparagine; by host glycosylation sites follow: asparagine 71, asparagine 114, asparagine 163, asparagine 182, and asparagine 262. The chain crosses the membrane as a helical span at residues valine 278 to asparagine 301. The Intravirion segment spans residues lysine 302 to valine 313.

This sequence belongs to the orthopoxvirus OPG185 family. In terms of assembly, heterodimerizes with OPG040. The heterodimer OPG185-OPG040 interacts with components of the entry fusion complex OPG143 and OPG094. Heterodimer with C3/VPC protein; disulfide-linked. In terms of processing, glycosylated; contains phosphate and sulfate-substituted glycans. O-glycosylation is required for hemagglutination and hemadsorption activities of infected cell membranes.

The protein resides in the virion membrane. It is found in the host membrane. Functionally, prevents cell to cell fusion by interacting with and directing the viral OPG040 protein on the host plasma membrane. The OPG185-OPG040 complex associates with components of the entry fusion complex (EFC) presumably to avoid superinfection and syncytium formation. Via its interaction with C3/VCP protein, protects the infected cell and probably also the extracellular enveloped virus from complement attack. This Homo sapiens (Human) protein is Protein OPG185 (OPG185).